A 280-amino-acid chain; its full sequence is 2-dehydro-3-deoxyphosphooctonate aldolase (280 aa).

The protein belongs to the KdsA family.

The protein localises to the cytoplasm. It catalyses the reaction D-arabinose 5-phosphate + phosphoenolpyruvate + H2O = 3-deoxy-alpha-D-manno-2-octulosonate-8-phosphate + phosphate. Its pathway is carbohydrate biosynthesis; 3-deoxy-D-manno-octulosonate biosynthesis; 3-deoxy-D-manno-octulosonate from D-ribulose 5-phosphate: step 2/3. It participates in bacterial outer membrane biogenesis; lipopolysaccharide biosynthesis. This Coxiella burnetii (strain CbuG_Q212) (Coxiella burnetii (strain Q212)) protein is 2-dehydro-3-deoxyphosphooctonate aldolase.